Here is a 228-residue protein sequence, read N- to C-terminus: MQKLKQQVFEANMDLPHYGLVTFTWGNVSAIDRERGLVVIKPSGVAYETMKADDMVVVDMSGNVVEGEYRPSSDTATHLELYRRYPSLGGIVHTHSTHATAWAQAGLAIPALGTTHADYFFGDIPCTRGLSEEEVQGEYELNTGKVIIETLGDAEPLHTPGIVVYQHGPFAWGKDAHDAVHNAVVMEEVAKMAWIARSINPQLNHIDSFLMNKHFMRKHGPNAYYGQK.

Substrate-binding positions include 26 to 27 (GN), 43 to 44 (SG), and 72 to 73 (SS). Zn(2+) is bound by residues aspartate 74, histidine 93, and histidine 95. The active-site Proton donor/acceptor is the aspartate 118. Position 167 (histidine 167) interacts with Zn(2+). The active-site Proton donor/acceptor is tyrosine 225.

The protein belongs to the aldolase class II family. AraD/FucA subfamily. Zn(2+) is required as a cofactor.

The enzyme catalyses L-ribulose 5-phosphate = D-xylulose 5-phosphate. It participates in cofactor degradation; L-ascorbate degradation; D-xylulose 5-phosphate from L-ascorbate: step 4/4. Catalyzes the isomerization of L-ribulose 5-phosphate to D-xylulose 5-phosphate. Is involved in the anaerobic L-ascorbate utilization. This is L-ribulose-5-phosphate 4-epimerase UlaF from Escherichia coli O6:K15:H31 (strain 536 / UPEC).